Here is a 62-residue protein sequence, read N- to C-terminus: Large ribosomal subunit protein bL28 (62 aa).

Belongs to the bacterial ribosomal protein bL28 family.

This is Large ribosomal subunit protein bL28 from Carboxydothermus hydrogenoformans (strain ATCC BAA-161 / DSM 6008 / Z-2901).